A 98-amino-acid chain; its full sequence is Cell cycle protein GpsB (98 aa).

Residues 34 to 72 (LDMVIKDYEAFHQEIEELQQENLQLKKQLEEANKRQPAQ) are a coiled coil.

Belongs to the GpsB family. Forms polymers through the coiled coil domains. Interacts with PBP1, MreC and EzrA.

The protein resides in the cytoplasm. Divisome component that associates with the complex late in its assembly, after the Z-ring is formed, and is dependent on DivIC and PBP2B for its recruitment to the divisome. Together with EzrA, is a key component of the system that regulates PBP1 localization during cell cycle progression. Its main role could be the removal of PBP1 from the cell pole after pole maturation is completed. Also contributes to the recruitment of PBP1 to the division complex. Not essential for septum formation. This is Cell cycle protein GpsB from Bacillus licheniformis (strain ATCC 14580 / DSM 13 / JCM 2505 / CCUG 7422 / NBRC 12200 / NCIMB 9375 / NCTC 10341 / NRRL NRS-1264 / Gibson 46).